The primary structure comprises 577 residues: Sulfite reductase [NADPH] hemoprotein beta-component 2 (577 aa).

[4Fe-4S] cluster contacts are provided by Cys-441, Cys-447, Cys-486, and Cys-490. Cys-490 is a siroheme binding site.

Belongs to the nitrite and sulfite reductase 4Fe-4S domain family. Alpha(8)-beta(8). The alpha component is a flavoprotein, the beta component is a hemoprotein. It depends on siroheme as a cofactor. The cofactor is [4Fe-4S] cluster.

It catalyses the reaction hydrogen sulfide + 3 NADP(+) + 3 H2O = sulfite + 3 NADPH + 4 H(+). It functions in the pathway sulfur metabolism; hydrogen sulfide biosynthesis; hydrogen sulfide from sulfite (NADPH route): step 1/1. In terms of biological role, component of the sulfite reductase complex that catalyzes the 6-electron reduction of sulfite to sulfide. This is one of several activities required for the biosynthesis of L-cysteine from sulfate. The protein is Sulfite reductase [NADPH] hemoprotein beta-component 2 of Pectobacterium carotovorum subsp. carotovorum (strain PC1).